The primary structure comprises 271 residues: MVSKTWICGFISIITVVQALSCEKHDVLKKYQVGKFSSLTSTERDTPPSTTIEKWWINVCEEHTVEPPEDCKKNDMLCGLTDVILPGKDAITTQIIDFDKNIGFNVEETESALTLTLKGATWGANSFDAKLEFQCNDNMKQDELTSHTWADKSIQLTLKGPSGCLKSKDDDKKNGDGDNGKDGDNEGKKPAKKAGGTLWFTWLFLYALLFTLIYLMVVSFLNTRGGSFQDFRAEFIQRSTQFLTSLPEFCREVVSRILGRSTAQRGGYSAV.

The first 19 residues, 1–19, serve as a signal peptide directing secretion; sequence MVSKTWICGFISIITVVQA. One can recognise an MRH domain in the interval 20–166; sequence LSCEKHDVLK…TLKGPSGCLK (147 aa). The Lumenal segment spans residues 20-197; that stretch reads LSCEKHDVLK…KKPAKKAGGT (178 aa). 3 cysteine pairs are disulfide-bonded: Cys-22/Cys-60, Cys-71/Cys-78, and Cys-135/Cys-164. Residues 161–190 form a disordered region; the sequence is PSGCLKSKDDDKKNGDGDNGKDGDNEGKKP. Basic and acidic residues predominate over residues 166–189; the sequence is KSKDDDKKNGDGDNGKDGDNEGKK. A helical transmembrane segment spans residues 198 to 218; that stretch reads LWFTWLFLYALLFTLIYLMVV. The Cytoplasmic segment spans residues 219-271; the sequence is SFLNTRGGSFQDFRAEFIQRSTQFLTSLPEFCREVVSRILGRSTAQRGGYSAV.

It belongs to the ATG27 family. Forms a complex with ATG9 and ATG23.

The protein resides in the cytoplasmic vesicle membrane. It localises to the golgi apparatus membrane. Its subcellular location is the mitochondrion membrane. The protein localises to the preautophagosomal structure membrane. Effector of VPS34 phosphatidylinositol 3-phosphate kinase signaling. Regulates the cytoplasm to vacuole transport (Cvt) vesicle formation. Plays a role in ATG protein retrieval from the pre-autophagosomal structure (PAS) and is especially required for autophagy-dependent cycling of ATG9. In Saccharomyces cerevisiae (strain YJM789) (Baker's yeast), this protein is Autophagy-related protein 27 (ATG27).